The primary structure comprises 90 residues: U7-theraphotoxin-Hhn1g (90 aa).

Positions 1–19 (MKTAIFTVVLALAVFAVLS) are cleaved as a signal peptide. The propeptide occupies 20–50 (FGWEANEKALSEEFTELIHEKEAASETEARE). 3 disulfides stabilise this stretch: Cys51/Cys65, Cys58/Cys70, and Cys64/Cys81.

Belongs to the neurotoxin 10 (Hwtx-1) family. 13 (Hntx-13) subfamily. In terms of tissue distribution, expressed by the venom gland.

It localises to the secreted. In terms of biological role, ion channel inhibitor. The polypeptide is U7-theraphotoxin-Hhn1g (Cyriopagopus hainanus (Chinese bird spider)).